The sequence spans 89 residues: Small ribosomal subunit protein uS15 (89 aa).

The disordered stretch occupies residues 1-24; that stretch reads MALTQTKKQELISQYQAHETDTGS.

This sequence belongs to the universal ribosomal protein uS15 family. In terms of assembly, part of the 30S ribosomal subunit. Forms a bridge to the 50S subunit in the 70S ribosome, contacting the 23S rRNA.

Its function is as follows. One of the primary rRNA binding proteins, it binds directly to 16S rRNA where it helps nucleate assembly of the platform of the 30S subunit by binding and bridging several RNA helices of the 16S rRNA. Forms an intersubunit bridge (bridge B4) with the 23S rRNA of the 50S subunit in the ribosome. This chain is Small ribosomal subunit protein uS15, found in Microcystis aeruginosa (strain NIES-843 / IAM M-2473).